Reading from the N-terminus, the 262-residue chain is ATP synthase subunit a (262 aa).

Helical transmembrane passes span 26-46, 86-106, 130-150, 204-226, and 240-260; these read VHID…FVFS, VAPL…IDLI, DISA…FYTI, LIFI…GIPL, and LQAF…YNKA.

It belongs to the ATPase A chain family. F-type ATPases have 2 components, CF(1) - the catalytic core - and CF(0) - the membrane proton channel. CF(1) has five subunits: alpha(3), beta(3), gamma(1), delta(1), epsilon(1). CF(0) has three main subunits: a(1), b(2) and c(9-12). The alpha and beta chains form an alternating ring which encloses part of the gamma chain. CF(1) is attached to CF(0) by a central stalk formed by the gamma and epsilon chains, while a peripheral stalk is formed by the delta and b chains.

Its subcellular location is the cell inner membrane. Functionally, key component of the proton channel; it plays a direct role in the translocation of protons across the membrane. This Haemophilus influenzae (strain PittEE) protein is ATP synthase subunit a.